Reading from the N-terminus, the 2813-residue chain is von Willebrand factor (2813 aa).

The first 22 residues, 1-22 (MSPTRLVRVLLALALILPGKLC), serve as a signal peptide directing secretion. Residues 23 to 763 (TKGTVGRSSM…SSPRSHRSKR (741 aa)) constitute a propeptide that is removed on maturation. Residues 33-201 (ARCSLFGGDF…ALSSGEQRCK (169 aa)) enclose the VWFD 1 domain. 2 disulfide bridges follow: C35/C162 and C57/C200. 3 N-linked (GlcNAc...) asparagine glycosylation sites follow: N99, N156, and N211. Residues 295–348 (CPAGMEYKECVSPCTRTCQSLHVKEVCQEQCVDGCSCPEGQLLDEGHCVGSAEC) form the TIL 1 domain. The 175-residue stretch at 386–560 (GECLVTGQSH…NAWKLLGACE (175 aa)) folds into the VWFD 2 domain. Intrachain disulfides connect C388/C524, C410/C559, and C432/C440. The Cell attachment site motif lies at 531–533 (RGD). 2 TIL domains span residues 652-707 (CPQG…KAQC) and 776-827 (CPAD…LERC). N-linked (GlcNAc...) asparagine glycosylation is present at N666. The short motif at 698–700 (RGD) is the Cell attachment site element. The amino-terminal stretch occupies residues 764 to 787 (SLSCRPPMVKLVCPADNPRAEGLE). 3 disulfide bridges follow: C767–C808, C776–C804, and C810–C821. The interval 788–833 (CAKTCQNYDLQCMSTGCVSGCLCPQGMVRHENRCVALERCPCFHQG) is E1. The CX stretch occupies residues 826-853 (RCPCFHQGQEYAPGETVKIDCNTCVCRD). An N-linked (GlcNAc...) asparagine glycan is attached at N857. One can recognise a VWFD 3 domain in the interval 865–1032 (ATCSAIGMAH…NSWKVNPQCA (168 aa)). Intrachain disulfides connect C867/C996, C889/C1031, C898/C993, C914/C921, C1060/C1084, C1071/C1111, C1089/C1091, C1126/C1130, C1149/C1169, C1153/C1165, and C1196/C1199. The TIL 4 domain maps to 1146-1196 (YNSCAPACPITCQHPEPLACPVQCVEGCHAHCPPGKILDELLQTCIDPEDC). N1231 is a glycosylation site (N-linked (GlcNAc...) asparagine). 2 disulfide bridges follow: C1234–C1237 and C1272–C1458. VWFA domains follow at residues 1277–1453 (DLVF…RDEI) and 1498–1665 (DVVF…PDLV). N-linked (GlcNAc...) asparagine glycans are attached at residues N1515 and N1574. Intrachain disulfides connect C1669-C1670, C1686-C1872, C1879-C1904, C1899-C1940, C1927-C2088, C1950-C2085, C1972-C2123, and C1993-C2001. A VWFA 3 domain is found at 1691–1871 (DVVLLLDGSS…TLGNSFFHKL (181 aa)). A VWFD 4 domain is found at 1948–2124 (CVCMGSSTRH…TVQQLGKTCQ (177 aa)). Positions 2216–2261 (CPRLCEGNTSSCGDQPSEGCFCPPNQVMLEGSCVPEEACTQCISED) are E2. N-linked (GlcNAc...) asparagine glycans are attached at residues N2223, N2290, N2357, and N2400. Residues 2255–2328 (TQCISEDGVR…CCPEYECVCD (74 aa)) form the VWFC 1 domain. The VWFC 2 domain occupies 2429 to 2495 (KVCVHRGTIY…HEGECCGRCL (67 aa)). Positions 2507–2509 (RGD) match the Cell attachment site motif. N-linked (GlcNAc...) asparagine glycosylation is found at N2546 and N2585. A VWFC 3 domain is found at 2580-2645 (EACLLNGTII…NQGECCGRCL (66 aa)). 4 cysteine pairs are disulfide-bonded: C2724-C2774, C2739-C2788, C2750-C2804, and C2754-C2806. The 89-residue stretch at 2724 to 2812 (CKDIIAKLQR…QCRCSPRKCS (89 aa)) folds into the CTCK domain. N2790 carries N-linked (GlcNAc...) asparagine glycosylation.

Multimeric. Interacts with F8. Post-translationally, all cysteine residues are involved in intrachain or interchain disulfide bonds. N- and O-glycosylated. In terms of tissue distribution, plasma.

It localises to the secreted. It is found in the extracellular space. The protein resides in the extracellular matrix. Functionally, important in the maintenance of hemostasis, it promotes adhesion of platelets to the sites of vascular injury by forming a molecular bridge between sub-endothelial collagen matrix and platelet-surface receptor complex, glycoprotein Ibalpha/IX/V. Also acts as a chaperone for coagulation factor VIII, delivering it to the site of injury, stabilizing its heterodimeric structure and protecting it from premature clearance from plasma. The polypeptide is von Willebrand factor (VWF) (Canis lupus familiaris (Dog)).